Reading from the N-terminus, the 347-residue chain is NADH-ubiquinone oxidoreductase chain 2 (347 aa).

A run of 11 helical transmembrane segments spans residues 3–23 (PPIL…VMLS), 25–45 (HWLL…PVLM), 66–86 (ASML…QWVV), 96–116 (IMMT…FWVP), 122–142 (ITLT…MSVL), 149–169 (INTN…GWGG), 178–198 (IMAY…IYNP), 201–221 (MILN…LFML), 237–257 (FPLI…LPPL), 274–294 (NMII…YFYL), and 323–343 (TILL…TPML).

The protein belongs to the complex I subunit 2 family. Core subunit of respiratory chain NADH dehydrogenase (Complex I) which is composed of 45 different subunits. Interacts with TMEM242.

It is found in the mitochondrion inner membrane. The catalysed reaction is a ubiquinone + NADH + 5 H(+)(in) = a ubiquinol + NAD(+) + 4 H(+)(out). Its function is as follows. Core subunit of the mitochondrial membrane respiratory chain NADH dehydrogenase (Complex I) which catalyzes electron transfer from NADH through the respiratory chain, using ubiquinone as an electron acceptor. Essential for the catalytic activity and assembly of complex I. The chain is NADH-ubiquinone oxidoreductase chain 2 from Canis rufus (Red wolf).